Consider the following 260-residue polypeptide: MPIGIFDSGIGGLTVFKEIAASFPKVDLYYLGDTARVPYGNKSKTTIIRYSVECASYLYHNYNVDAIVIACNTASSYALDTLREILPIPVIGVVQPGAESAVKVSKNKKIGVIGTSATIKSNSYFETLKSLDKDLEIYQKACPLFVPLVEEGWIDNEVAKLTVKEYLDDLVKTGIDTLILGCTHYPLLKNTIKGLYPHLNIVDSSVAIVEHLKNIKLNIEETGKRKIFITDESHAFDKLKNMLVGDIKTEKIELSDLCSL.

Substrate is bound by residues 7–8 and 39–40; these read DS and YG. The active-site Proton donor/acceptor is C71. Substrate is bound at residue 72-73; sequence NT. Catalysis depends on C182, which acts as the Proton donor/acceptor. 183–184 is a binding site for substrate; that stretch reads TH.

Belongs to the aspartate/glutamate racemases family.

The enzyme catalyses L-glutamate = D-glutamate. Its pathway is cell wall biogenesis; peptidoglycan biosynthesis. In terms of biological role, provides the (R)-glutamate required for cell wall biosynthesis. The polypeptide is Glutamate racemase (Sulfurihydrogenibium sp. (strain YO3AOP1)).